Reading from the N-terminus, the 110-residue chain is Glutaredoxin-1 (110 aa).

Positions 7–110 constitute a Glutaredoxin domain; the sequence is IKHVKDLIAE…EELLEPILAN (104 aa). Lys-11 participates in a covalent cross-link: Glycyl lysine isopeptide (Lys-Gly) (interchain with G-Cter in ubiquitin). Residues 24 to 29, Gln-63, Val-75, and 88 to 89 each bind glutathione; these read KTYCPY and ND. An S-glutathionyl cysteine; alternate modification is found at Cys-27. Cys-27 and Cys-30 form a disulfide bridge.

It belongs to the glutaredoxin family.

The protein localises to the cytoplasm. It is found in the nucleus. It carries out the reaction 2 glutathione + H2O2 = glutathione disulfide + 2 H2O. The catalysed reaction is 1-chloro-2,4-dinitrobenzene + glutathione = 2,4-dinitrophenyl-S-glutathione + chloride + H(+). It catalyses the reaction RX + glutathione = an S-substituted glutathione + a halide anion + H(+). In terms of biological role, component of the glutathione system which performs several activities such as glutathione-dependent oxidoreductase, glutathione peroxidase and glutathione S-transferase (GST) activity. The disulfide bond functions as an electron carrier in the glutathione-dependent synthesis of deoxyribonucleotides by the enzyme ribonucleotide reductase. In addition, it is also involved in reducing cytosolic protein- and non-protein-disulfides in a coupled system with glutathione reductase. Required for resistance to reactive oxygen species (ROS) by directly reducing hydroperoxides and for the detoxification of ROS-mediated damage. GRX1 is less active as an oxidoreductase than GRX2. This chain is Glutaredoxin-1 (GRX1), found in Saccharomyces cerevisiae (strain ATCC 204508 / S288c) (Baker's yeast).